A 366-amino-acid chain; its full sequence is Ferrochelatase (366 aa).

Fe cation contacts are provided by His-210 and Glu-293.

It belongs to the ferrochelatase family.

Its subcellular location is the cytoplasm. The catalysed reaction is heme b + 2 H(+) = protoporphyrin IX + Fe(2+). The protein operates within porphyrin-containing compound metabolism; protoheme biosynthesis; protoheme from protoporphyrin-IX: step 1/1. Functionally, catalyzes the ferrous insertion into protoporphyrin IX. The protein is Ferrochelatase of Leptospira borgpetersenii serovar Hardjo-bovis (strain JB197).